The sequence spans 370 residues: Chorismate synthase (370 aa).

A disordered region spans residues 41–60 (IQGDLDRRKPGTSRHVTQRK). NADP(+) is bound by residues arginine 48 and arginine 54. FMN is bound by residues 125–127 (RSS), 238–239 (NA), glycine 278, 293–297 (KPTSS), and arginine 319.

Belongs to the chorismate synthase family. In terms of assembly, homotetramer. Requires FMNH2 as cofactor.

The enzyme catalyses 5-O-(1-carboxyvinyl)-3-phosphoshikimate = chorismate + phosphate. It participates in metabolic intermediate biosynthesis; chorismate biosynthesis; chorismate from D-erythrose 4-phosphate and phosphoenolpyruvate: step 7/7. Catalyzes the anti-1,4-elimination of the C-3 phosphate and the C-6 proR hydrogen from 5-enolpyruvylshikimate-3-phosphate (EPSP) to yield chorismate, which is the branch point compound that serves as the starting substrate for the three terminal pathways of aromatic amino acid biosynthesis. This reaction introduces a second double bond into the aromatic ring system. The polypeptide is Chorismate synthase (Cupriavidus pinatubonensis (strain JMP 134 / LMG 1197) (Cupriavidus necator (strain JMP 134))).